A 940-amino-acid polypeptide reads, in one-letter code: Isoleucine--tRNA ligase (940 aa).

A 'HIGH' region motif is present at residues 58 to 68 (PYANGSIHIGH). Position 564 (glutamate 564) interacts with L-isoleucyl-5'-AMP. Residues 605-609 (KMSKS) carry the 'KMSKS' region motif. Lysine 608 is a binding site for ATP. Residues cysteine 903, cysteine 906, cysteine 923, and cysteine 926 each contribute to the Zn(2+) site.

The protein belongs to the class-I aminoacyl-tRNA synthetase family. IleS type 1 subfamily. Monomer. Zn(2+) serves as cofactor.

Its subcellular location is the cytoplasm. The catalysed reaction is tRNA(Ile) + L-isoleucine + ATP = L-isoleucyl-tRNA(Ile) + AMP + diphosphate. In terms of biological role, catalyzes the attachment of isoleucine to tRNA(Ile). As IleRS can inadvertently accommodate and process structurally similar amino acids such as valine, to avoid such errors it has two additional distinct tRNA(Ile)-dependent editing activities. One activity is designated as 'pretransfer' editing and involves the hydrolysis of activated Val-AMP. The other activity is designated 'posttransfer' editing and involves deacylation of mischarged Val-tRNA(Ile). The polypeptide is Isoleucine--tRNA ligase (Shewanella woodyi (strain ATCC 51908 / MS32)).